We begin with the raw amino-acid sequence, 217 residues long: MTIRNFNYHMTHFVISAPDIRHLPRDEGIEVAFAGRSNAGKSSALNTLTGQKSLARTSKTPGRTQLINLFEVVEGVRLVDLPGYGYAEVPEEMKLKWQRALGEYLQKRNCLKGLVVLMDIRHPLKDLDQQMITWAVAVGTPVMLLLTKADKLASGARKAQLNMVREAIIPFMGDIQVEAFSSLKKIGVDKLREKLDTWFSEIPPEVMIDEYDDEEGK.

Positions 27–201 (EGIEVAFAGR…REKLDTWFSE (175 aa)) constitute an EngB-type G domain. GTP-binding positions include 35–42 (GRSNAGKS), 62–66 (GRTQL), 80–83 (DLPG), 147–150 (TKAD), and 180–182 (FSS). 2 residues coordinate Mg(2+): Ser42 and Thr64.

This sequence belongs to the TRAFAC class TrmE-Era-EngA-EngB-Septin-like GTPase superfamily. EngB GTPase family. Requires Mg(2+) as cofactor.

Functionally, necessary for normal cell division and for the maintenance of normal septation. In Yersinia enterocolitica serotype O:8 / biotype 1B (strain NCTC 13174 / 8081), this protein is Probable GTP-binding protein EngB.